The primary structure comprises 118 residues: Holo-[acyl-carrier-protein] synthase (118 aa).

Mg(2+)-binding residues include D8 and E58.

The protein belongs to the P-Pant transferase superfamily. AcpS family. Mg(2+) is required as a cofactor.

Its subcellular location is the cytoplasm. The catalysed reaction is apo-[ACP] + CoA = holo-[ACP] + adenosine 3',5'-bisphosphate + H(+). Transfers the 4'-phosphopantetheine moiety from coenzyme A to a Ser of acyl-carrier-protein. This Listeria monocytogenes serotype 4a (strain HCC23) protein is Holo-[acyl-carrier-protein] synthase.